A 331-amino-acid polypeptide reads, in one-letter code: Vitamin B12 import system permease protein BtuC (331 aa).

A run of 7 helical transmembrane segments spans residues 21 to 43 (LALL…ERWI), 63 to 85 (PRTL…MQAV), 90 to 112 (LAEP…TVLL), 116 to 138 (LLPV…FLLL), 151 to 173 (LLIG…YFST), 193 to 210 (WRHG…LWLS), and 239 to 261 (VLVL…IAFI).

The protein belongs to the binding-protein-dependent transport system permease family. FecCD subfamily. As to quaternary structure, the complex is composed of two ATP-binding proteins (BtuD), two transmembrane proteins (BtuC) and a solute-binding protein (BtuF).

It is found in the cell inner membrane. Part of the ABC transporter complex BtuCDF involved in vitamin B12 import. Involved in the translocation of the substrate across the membrane. The protein is Vitamin B12 import system permease protein BtuC of Pectobacterium atrosepticum (strain SCRI 1043 / ATCC BAA-672) (Erwinia carotovora subsp. atroseptica).